We begin with the raw amino-acid sequence, 1067 residues long: Protein CLEC16A homolog (1067 aa).

The region spanning 50-199 (LRCIAEILIW…AVRTISLNVY (150 aa)) is the FPL domain. A helical transmembrane segment spans residues 333–353 (SIVALFLLSLVFLVVSHAPLV). The span at 409-418 (SSSSYALSED) shows a compositional bias: low complexity. Disordered stretches follow at residues 409-434 (SSSS…LDSQ), 837-861 (ASSS…PMFS), 876-993 (SNSA…SRSH), and 1037-1067 (QSSE…IETV). Residues 421-432 (VESSSPATTELD) show a composition bias toward polar residues. Residues 876-888 (SNSAGVSRTQMAP) show a composition bias toward polar residues. A compositionally biased stretch (basic and acidic residues) spans 917 to 926 (RADHSDRERS). Low complexity predominate over residues 927 to 947 (PSVSMGSHSSSQSRENSQPRS). Positions 951-974 (RSRESSPRMPRPRSEEIPLEDFQH) are enriched in basic and acidic residues. Over residues 975-993 (SRNNSPHSRGNPSPASRSH) the composition is skewed to polar residues. A compositionally biased stretch (basic and acidic residues) spans 1057 to 1067 (EGRRRGAIETV).

The protein belongs to the CLEC16A/gop-1 family. In terms of assembly, interacts with the class C Vps-HOPS complex components; Car, Dor and Vps16a.

The protein resides in the cytoplasmic vesicle. The protein localises to the autophagosome membrane. Its subcellular location is the late endosome membrane. It localises to the golgi apparatus membrane. In terms of biological role, required for mitophagy, autophagy and endosome maturation, possibly by acting in multiple membrane trafficking pathways. Required for endosome trafficking and maturation. Functions with the class C Vps-HOPS complex member Vps16a to promote endosomal maturation into degradative late endosomes and lysosomes. In response to starvation, functions at an early stage of autophagy to promote autophagosome growth and efficient autophagy. Essential for the recruitment of lva-positive Golgi elements to autophagosomes. Likely to function by promoting membrane traffic from the Golgi complex to the developing autophagosomes. Also regulates synaptic growth at the neuromuscular junctions (NMJ) by down-regulating BMP signaling. In Drosophila melanogaster (Fruit fly), this protein is Protein CLEC16A homolog.